The sequence spans 294 residues: Protein PET54 (294 aa).

Its subcellular location is the mitochondrion inner membrane. Activator of specific mitochondrial mRNAs. PET54 is involved in the excision of intron aI5-beta from pre-mRNA for cytochrome c oxidase I (COX1) and plays a role in promoting the translation of COX3. The polypeptide is Protein PET54 (PET54) (Saccharomyces bayanus (Yeast)).